The following is a 101-amino-acid chain: Small ribosomal subunit protein uS14 (101 aa).

Belongs to the universal ribosomal protein uS14 family. Part of the 30S ribosomal subunit. Contacts proteins S3 and S10.

Functionally, binds 16S rRNA, required for the assembly of 30S particles and may also be responsible for determining the conformation of the 16S rRNA at the A site. This Haemophilus influenzae (strain PittGG) protein is Small ribosomal subunit protein uS14.